Reading from the N-terminus, the 193-residue chain is Potassium-transporting ATPase KdpC subunit (193 aa).

A helical transmembrane segment spans residues 7–27 (PLVVLFVVLTAVTGLAYPAVM).

It belongs to the KdpC family. As to quaternary structure, the system is composed of three essential subunits: KdpA, KdpB and KdpC.

It is found in the cell inner membrane. In terms of biological role, part of the high-affinity ATP-driven potassium transport (or Kdp) system, which catalyzes the hydrolysis of ATP coupled with the electrogenic transport of potassium into the cytoplasm. This subunit acts as a catalytic chaperone that increases the ATP-binding affinity of the ATP-hydrolyzing subunit KdpB by the formation of a transient KdpB/KdpC/ATP ternary complex. The sequence is that of Potassium-transporting ATPase KdpC subunit from Burkholderia orbicola (strain MC0-3).